The chain runs to 150 residues: MSSKEIVSNRKALRNYEVLDTLEAGVVLTGTEIKSLRDHGGNLGDAYVAISKGEAWLLNASIAPYRFGNIYNHEERRKRKLLLHRYEIRKLEGRVAQKGITIIPLGMFLSRGYVKIRLGCCRGKKAHDKRQTIIAREKQREVESAMKRYR.

The protein belongs to the SmpB family.

The protein localises to the cytoplasm. Required for rescue of stalled ribosomes mediated by trans-translation. Binds to transfer-messenger RNA (tmRNA), required for stable association of tmRNA with ribosomes. tmRNA and SmpB together mimic tRNA shape, replacing the anticodon stem-loop with SmpB. tmRNA is encoded by the ssrA gene; the 2 termini fold to resemble tRNA(Ala) and it encodes a 'tag peptide', a short internal open reading frame. During trans-translation Ala-aminoacylated tmRNA acts like a tRNA, entering the A-site of stalled ribosomes, displacing the stalled mRNA. The ribosome then switches to translate the ORF on the tmRNA; the nascent peptide is terminated with the 'tag peptide' encoded by the tmRNA and targeted for degradation. The ribosome is freed to recommence translation, which seems to be the essential function of trans-translation. In Chlamydia caviae (strain ATCC VR-813 / DSM 19441 / 03DC25 / GPIC) (Chlamydophila caviae), this protein is SsrA-binding protein.